The sequence spans 227 residues: Orotate phosphoribosyltransferase (227 aa).

Residue lysine 34 participates in 5-phospho-alpha-D-ribose 1-diphosphate binding. Orotate is bound at residue 42–43 (FF). Residues 80–81 (YK), arginine 106, lysine 107, lysine 110, histidine 112, and 131–139 (DDVISAGTS) contribute to the 5-phospho-alpha-D-ribose 1-diphosphate site. Positions 135 and 163 each coordinate orotate.

It belongs to the purine/pyrimidine phosphoribosyltransferase family. PyrE subfamily. In terms of assembly, homodimer. Requires Mg(2+) as cofactor.

The catalysed reaction is orotidine 5'-phosphate + diphosphate = orotate + 5-phospho-alpha-D-ribose 1-diphosphate. It participates in pyrimidine metabolism; UMP biosynthesis via de novo pathway; UMP from orotate: step 1/2. In terms of biological role, catalyzes the transfer of a ribosyl phosphate group from 5-phosphoribose 1-diphosphate to orotate, leading to the formation of orotidine monophosphate (OMP). The protein is Orotate phosphoribosyltransferase of Cupriavidus necator (strain ATCC 17699 / DSM 428 / KCTC 22496 / NCIMB 10442 / H16 / Stanier 337) (Ralstonia eutropha).